The sequence spans 567 residues: Urease subunit alpha (567 aa).

Residues 129 to 567 (GGIDTHIHWI…LPMAQRYFLF (439 aa)) enclose the Urease domain. His134, His136, and Lys217 together coordinate Ni(2+). Residue Lys217 is modified to N6-carboxylysine. His219 serves as a coordination point for substrate. Positions 246 and 272 each coordinate Ni(2+). His320 (proton donor) is an active-site residue. Asp360 is a Ni(2+) binding site.

Belongs to the metallo-dependent hydrolases superfamily. Urease alpha subunit family. In terms of assembly, heterotrimer of UreA (gamma), UreB (beta) and UreC (alpha) subunits. Three heterotrimers associate to form the active enzyme. Ni cation serves as cofactor. Post-translationally, carboxylation allows a single lysine to coordinate two nickel ions.

It localises to the cytoplasm. The catalysed reaction is urea + 2 H2O + H(+) = hydrogencarbonate + 2 NH4(+). It functions in the pathway nitrogen metabolism; urea degradation; CO(2) and NH(3) from urea (urease route): step 1/1. The sequence is that of Urease subunit alpha from Enterobacter sp. (strain 638).